We begin with the raw amino-acid sequence, 462 residues long: Proline--tRNA ligase (462 aa).

Belongs to the class-II aminoacyl-tRNA synthetase family. ProS type 3 subfamily. As to quaternary structure, homodimer.

It localises to the cytoplasm. The catalysed reaction is tRNA(Pro) + L-proline + ATP = L-prolyl-tRNA(Pro) + AMP + diphosphate. Its function is as follows. Catalyzes the attachment of proline to tRNA(Pro) in a two-step reaction: proline is first activated by ATP to form Pro-AMP and then transferred to the acceptor end of tRNA(Pro). The chain is Proline--tRNA ligase from Thermoplasma volcanium (strain ATCC 51530 / DSM 4299 / JCM 9571 / NBRC 15438 / GSS1).